We begin with the raw amino-acid sequence, 230 residues long: Ethylene-responsive transcription factor ERF012 (230 aa).

Over residues 1-17 (MVKQERKIQTSSTKKEM) the composition is skewed to basic and acidic residues. The interval 1–51 (MVKQERKIQTSSTKKEMPLSSSPSSSSSSSSSSSSSSCKNKNKKSKIKKYK) is disordered. The segment covering 20–39 (SSSPSSSSSSSSSSSSSSCK) has biased composition (low complexity). The span at 40-51 (NKNKKSKIKKYK) shows a compositional bias: basic residues. The segment at residues 49 to 106 (KYKGVRMRSWGSWVSEIRAPNQKTRIWLGSYSTAEAAARAYDVALLCLKGPQANLNFP) is a DNA-binding region (AP2/ERF).

Belongs to the AP2/ERF transcription factor family. ERF subfamily. In terms of tissue distribution, expressed cotyledons, ovules and seeds of immature siliques.

Its subcellular location is the nucleus. Its function is as follows. Transcriptional activator involved in the regulation of plant development and tolerance to abiotic stresses. Involved in salt and osmotic stress response pathways. May be regulated by the stress-related genes RD29A, RD22, DREB1A or P5CS during stress response. Binds to the GCC-box pathogenesis-related promoter element. May be involved in the regulation of gene expression by stress factors and by components of stress signal transduction pathways. The protein is Ethylene-responsive transcription factor ERF012 (ERF012) of Arabidopsis thaliana (Mouse-ear cress).